Reading from the N-terminus, the 469-residue chain is MFLALLYLALPLADVLLSAEVSGLPGGDRLDCVKASDQCLKEQSCSTKYRTLRQCVAGKESNFSRATGLEAKDECKSAMEALKQKSLYNCRCKRGMKKEKNCLRIYWSMYQSLQGNDLLEDSPYEPVNSRLSDIFRLAPIVSVEPVLSKGNNCLDAAKACNLNDTCKRFRSAYITPCTSSTSNEICNKRKCHKALRLFFDKVPPKHSYGMLFCSCRDVACTERRRQTIVPVCSYEDREKPNCLNLQESCKKNYICRSRLADFFTNCQPESRSVSSCLKENYADCLLAYSGLIGTVMTPNYIDSSSLSVAPWCDCSNSGNDIDECRKFLNFFQDNTCLKNAIQAFGNGTDVNVWQPILPVQTTTATTTTASRLKNTGSETTNNEIPTHNDSPACANLQAQKKRKSNESVDTELCLNENAIGKDNTPGVSTSHISSENSFALPTSFYPSTPLILMTIALSLFLFLSSSVVL.

A signal peptide spans methionine 1 to glycine 27. Repeat copies occupy residues aspartate 28 to asparagine 116, lysine 149 to arginine 237, and glutamate 238 to isoleucine 341. An intrachain disulfide couples cysteine 39 to cysteine 45. Residues asparagine 62 and asparagine 163 are each glycosylated (N-linked (GlcNAc...) asparagine). 10 disulfides stabilise this stretch: cysteine 153–cysteine 213, cysteine 160–cysteine 166, cysteine 177–cysteine 191, cysteine 186–cysteine 232, cysteine 215–cysteine 220, cysteine 242–cysteine 312, cysteine 249–cysteine 255, cysteine 266–cysteine 284, cysteine 276–cysteine 336, and cysteine 314–cysteine 324. Residues asparagine 346 and asparagine 405 are each glycosylated (N-linked (GlcNAc...) asparagine). The GPI-anchor amidated serine moiety is linked to residue serine 430. Positions histidine 431 to leucine 469 are cleaved as a propeptide — removed in mature form.

It belongs to the GDNFR family. Interacts with GDNF ligand and RET: forms a 2:2:2 ternary complex composed of GDNF ligand, GFRA1 and RET receptor.

The protein resides in the cell membrane. It localises to the golgi apparatus. It is found in the trans-Golgi network. The protein localises to the endosome. Its subcellular location is the multivesicular body. In terms of biological role, coreceptor for GDNF, a neurotrophic factor that enhances survival and morphological differentiation of dopaminergic neurons and increases their high-affinity dopamine uptake. GDNF-binding leads to autophosphorylation and activation of the RET receptor. The chain is GDNF family receptor alpha-1 (GFRA1) from Gallus gallus (Chicken).